The primary structure comprises 110 residues: Large ribosomal subunit protein uL22 (110 aa).

This sequence belongs to the universal ribosomal protein uL22 family. In terms of assembly, part of the 50S ribosomal subunit.

In terms of biological role, this protein binds specifically to 23S rRNA; its binding is stimulated by other ribosomal proteins, e.g. L4, L17, and L20. It is important during the early stages of 50S assembly. It makes multiple contacts with different domains of the 23S rRNA in the assembled 50S subunit and ribosome. Its function is as follows. The globular domain of the protein is located near the polypeptide exit tunnel on the outside of the subunit, while an extended beta-hairpin is found that lines the wall of the exit tunnel in the center of the 70S ribosome. This chain is Large ribosomal subunit protein uL22, found in Methylococcus capsulatus (strain ATCC 33009 / NCIMB 11132 / Bath).